The following is a 230-amino-acid chain: DNA ADP-ribosyl transferase (230 aa).

In terms of domain architecture, DarT spans 26 to 230; it reads WIVWHFTHAD…KYVIKPGMYY (205 aa). Residues 30–32, Gly-39, Leu-47, and Arg-67 contribute to the NAD(+) site; that span reads HFT. Arg-67 acts as the Proton acceptor in catalysis. Glu-183 is a catalytic residue.

The protein belongs to the DarT ADP-ribosyltransferase family. In terms of assembly, interacts with cognate antitoxin DarG (via C-terminus); this heterodimeric complex neutralizes the toxic effect of DarT by preventing ssDNA binding to DarT and consequently inactivating the toxin by direct protein-protein interactions.

The enzyme catalyses a thymidine in DNA + NAD(+) = an N-(ADP-alpha-D-ribosyl)-thymidine in DNA + nicotinamide + H(+). Functionally, toxic component of the hybrid type II/IV toxin-antitoxin (TA) system DarTG, which plays a crucial role in controlling bacterial growth and bacteriophage infection. ADP-ribosylates ssDNA, preferentially in the motif TTTW. In case of phage infection, DarT toxin ADP-ribosylates DNA, which inhibits both viral DNA and RNA synthesis and leads to abortive infection. Its toxic effect is neutralized by cognate antitoxin DarG. This chain is DNA ADP-ribosyl transferase, found in Mycobacterium bovis (strain BCG / Pasteur 1173P2).